We begin with the raw amino-acid sequence, 376 residues long: UDP-N-acetylglucosamine--N-acetylmuramyl-(pentapeptide) pyrophosphoryl-undecaprenol N-acetylglucosamine transferase (376 aa).

Residues 11–13, asparagine 117, arginine 160, serine 208, and glutamine 310 each bind UDP-N-acetyl-alpha-D-glucosamine; that span reads TGG.

It belongs to the glycosyltransferase 28 family. MurG subfamily.

The protein resides in the cell inner membrane. The enzyme catalyses di-trans,octa-cis-undecaprenyl diphospho-N-acetyl-alpha-D-muramoyl-L-alanyl-D-glutamyl-meso-2,6-diaminopimeloyl-D-alanyl-D-alanine + UDP-N-acetyl-alpha-D-glucosamine = di-trans,octa-cis-undecaprenyl diphospho-[N-acetyl-alpha-D-glucosaminyl-(1-&gt;4)]-N-acetyl-alpha-D-muramoyl-L-alanyl-D-glutamyl-meso-2,6-diaminopimeloyl-D-alanyl-D-alanine + UDP + H(+). Its pathway is cell wall biogenesis; peptidoglycan biosynthesis. In terms of biological role, cell wall formation. Catalyzes the transfer of a GlcNAc subunit on undecaprenyl-pyrophosphoryl-MurNAc-pentapeptide (lipid intermediate I) to form undecaprenyl-pyrophosphoryl-MurNAc-(pentapeptide)GlcNAc (lipid intermediate II). The polypeptide is UDP-N-acetylglucosamine--N-acetylmuramyl-(pentapeptide) pyrophosphoryl-undecaprenol N-acetylglucosamine transferase (Rickettsia rickettsii (strain Iowa)).